Consider the following 349-residue polypeptide: Alanine racemase (349 aa).

The Proton acceptor; specific for D-alanine role is filled by Lys-35. Lys-35 is modified (N6-(pyridoxal phosphate)lysine). Substrate is bound at residue Arg-130. Tyr-244 functions as the Proton acceptor; specific for L-alanine in the catalytic mechanism. Met-292 is a binding site for substrate.

It belongs to the alanine racemase family. The cofactor is pyridoxal 5'-phosphate.

The enzyme catalyses L-alanine = D-alanine. Its pathway is amino-acid biosynthesis; D-alanine biosynthesis; D-alanine from L-alanine: step 1/1. Catalyzes the interconversion of L-alanine and D-alanine. May also act on other amino acids. This Cereibacter sphaeroides (strain ATCC 17023 / DSM 158 / JCM 6121 / CCUG 31486 / LMG 2827 / NBRC 12203 / NCIMB 8253 / ATH 2.4.1.) (Rhodobacter sphaeroides) protein is Alanine racemase (alr).